We begin with the raw amino-acid sequence, 109 residues long: UPF0060 membrane protein ABO_1373 (109 aa).

Helical transmembrane passes span 1-21 (MLAL…IVGC), 33-53 (PGWV…LLSL), 63-83 (AAYG…VEGV), and 87-107 (PWDF…MFAP).

The protein belongs to the UPF0060 family.

The protein resides in the cell inner membrane. The sequence is that of UPF0060 membrane protein ABO_1373 from Alcanivorax borkumensis (strain ATCC 700651 / DSM 11573 / NCIMB 13689 / SK2).